A 330-amino-acid polypeptide reads, in one-letter code: Lipoyl synthase (330 aa).

Residues 1–31 (MSDAPIATSSEVTQSPADYDPTKKQKSAEKT) form a disordered region. Residues 7 to 16 (ATSSEVTQSP) are compositionally biased toward polar residues. Residues 20–31 (DPTKKQKSAEKT) are compositionally biased toward basic and acidic residues. 7 residues coordinate [4Fe-4S] cluster: Cys77, Cys82, Cys88, Cys103, Cys107, Cys110, and Ser317. The Radical SAM core domain occupies 88–306 (CFGKGTATFM…EEEAYKMGFT (219 aa)).

Belongs to the radical SAM superfamily. Lipoyl synthase family. Requires [4Fe-4S] cluster as cofactor.

It localises to the cytoplasm. It carries out the reaction [[Fe-S] cluster scaffold protein carrying a second [4Fe-4S](2+) cluster] + N(6)-octanoyl-L-lysyl-[protein] + 2 oxidized [2Fe-2S]-[ferredoxin] + 2 S-adenosyl-L-methionine + 4 H(+) = [[Fe-S] cluster scaffold protein] + N(6)-[(R)-dihydrolipoyl]-L-lysyl-[protein] + 4 Fe(3+) + 2 hydrogen sulfide + 2 5'-deoxyadenosine + 2 L-methionine + 2 reduced [2Fe-2S]-[ferredoxin]. It participates in protein modification; protein lipoylation via endogenous pathway; protein N(6)-(lipoyl)lysine from octanoyl-[acyl-carrier-protein]: step 2/2. In terms of biological role, catalyzes the radical-mediated insertion of two sulfur atoms into the C-6 and C-8 positions of the octanoyl moiety bound to the lipoyl domains of lipoate-dependent enzymes, thereby converting the octanoylated domains into lipoylated derivatives. The chain is Lipoyl synthase from Cupriavidus metallidurans (strain ATCC 43123 / DSM 2839 / NBRC 102507 / CH34) (Ralstonia metallidurans).